The primary structure comprises 941 residues: 26S proteasome regulatory subunit RPN2 (941 aa).

10 PC repeats span residues 363–396 (SATA…SSRF), 400–437 (GSLY…EDVD), 442–476 (GASL…TSGE), 477–511 (AAAF…GNIT), 513–546 (GLSM…LIRY), 547–582 (GGAF…DVRR), 583–615 (AAVT…AHDR), 617–651 (GAAF…FVRQ), 652–689 (AAMI…KHQE), and 695–731 (GACV…VGLA). The interval 808-854 (KARAKKTKKEKDTNEDDKKKKEKDLKKEETKKDDAKKESEAEEDFNK) is disordered. Over residues 816–854 (KEKDTNEDDKKKKEKDLKKEETKKDDAKKESEAEEDFNK) the composition is skewed to basic and acidic residues.

Belongs to the proteasome subunit S1 family.

Acts as a regulatory subunit of the 26S proteasome which is involved in the ATP-dependent degradation of ubiquitinated proteins. The polypeptide is 26S proteasome regulatory subunit RPN2 (RPN2) (Candida glabrata (strain ATCC 2001 / BCRC 20586 / JCM 3761 / NBRC 0622 / NRRL Y-65 / CBS 138) (Yeast)).